The following is a 212-amino-acid chain: MDGVHDLAGVQGFGKVPHTVNADIGPTFHAEWEHLPYSLMFAGVAELGAFSVDEVRYVVERMEPRHYMMTPYYERYVIGVATLMVEKGILTQDELESLAGGPFPLSRPSESEGRPAPVETTTFEVGQRVRVRDEYVPGHIRMPAYCRGRVGTISHRTTEKWPFPDAIGHGRNDAGEEPTYHVKFAAEELFGSDTDGGSVVVDLFEGYLEPAA.

The protein belongs to the nitrile hydratase subunit beta family. In terms of assembly, heterodimer of an alpha and a beta chain.

The catalysed reaction is an aliphatic primary amide = an aliphatic nitrile + H2O. In terms of biological role, NHase catalyzes the hydration of various nitrile compounds to the corresponding amides. This chain is Nitrile hydratase subunit beta (nthB), found in Rhodococcus erythropolis (Arthrobacter picolinophilus).